We begin with the raw amino-acid sequence, 359 residues long: Fructose-bisphosphate aldolase (359 aa).

Residue Ser61 coordinates D-glyceraldehyde 3-phosphate. The Proton donor role is filled by Asp109. Positions 110, 144, 174, and 226 each coordinate Zn(2+). Gly227 serves as a coordination point for dihydroxyacetone phosphate. Zn(2+) is bound at residue His265. Dihydroxyacetone phosphate is bound by residues 266–268 (GGS) and 287–290 (NIDT).

It belongs to the class II fructose-bisphosphate aldolase family. Requires Zn(2+) as cofactor.

The enzyme catalyses beta-D-fructose 1,6-bisphosphate = D-glyceraldehyde 3-phosphate + dihydroxyacetone phosphate. Its pathway is carbohydrate degradation; glycolysis; D-glyceraldehyde 3-phosphate and glycerone phosphate from D-glucose: step 4/4. Its function is as follows. Catalyzes the aldol condensation of dihydroxyacetone phosphate (DHAP or glycerone-phosphate) with glyceraldehyde 3-phosphate (G3P) to form fructose 1,6-bisphosphate (FBP) in gluconeogenesis and the reverse reaction in glycolysis. The polypeptide is Fructose-bisphosphate aldolase (fba) (Borreliella burgdorferi (strain ATCC 35210 / DSM 4680 / CIP 102532 / B31) (Borrelia burgdorferi)).